Reading from the N-terminus, the 340-residue chain is UDP-3-O-acylglucosamine N-acyltransferase (340 aa).

H247 functions as the Proton acceptor in the catalytic mechanism.

The protein belongs to the transferase hexapeptide repeat family. LpxD subfamily. As to quaternary structure, homotrimer.

The catalysed reaction is a UDP-3-O-[(3R)-3-hydroxyacyl]-alpha-D-glucosamine + a (3R)-hydroxyacyl-[ACP] = a UDP-2-N,3-O-bis[(3R)-3-hydroxyacyl]-alpha-D-glucosamine + holo-[ACP] + H(+). The protein operates within bacterial outer membrane biogenesis; LPS lipid A biosynthesis. Functionally, catalyzes the N-acylation of UDP-3-O-acylglucosamine using 3-hydroxyacyl-ACP as the acyl donor. Is involved in the biosynthesis of lipid A, a phosphorylated glycolipid that anchors the lipopolysaccharide to the outer membrane of the cell. In Caulobacter sp. (strain K31), this protein is UDP-3-O-acylglucosamine N-acyltransferase.